The chain runs to 303 residues: Probable 5-dehydro-4-deoxyglucarate dehydratase (303 aa).

The protein belongs to the DapA family.

The enzyme catalyses 5-dehydro-4-deoxy-D-glucarate + H(+) = 2,5-dioxopentanoate + CO2 + H2O. It participates in carbohydrate acid metabolism; D-glucarate degradation; 2,5-dioxopentanoate from D-glucarate: step 2/2. The chain is Probable 5-dehydro-4-deoxyglucarate dehydratase from Pseudomonas putida (strain GB-1).